The following is a 205-amino-acid chain: Glycerol-3-phosphate acyltransferase (205 aa).

At 1 to 3 the chain is on the periplasmic side; the sequence is MSA. Residues 4 to 24 traverse the membrane as a helical segment; the sequence is IAPGMILIAYLCGSISSAILV. Over 25–52 the chain is Cytoplasmic; the sequence is CRLCGLPDPRTSGSGNPGATNVLRIGGK. The helical transmembrane segment at 53–73 threads the bilayer; sequence GAAVAVLIFDVLKGMLPVWGA. The Periplasmic portion of the chain corresponds to 74–80; sequence YELGVSP. The chain crosses the membrane as a helical span at residues 81 to 101; sequence FWLGLIAIAACLGHIWPVFFG. At 102 to 111 the chain is on the cytoplasmic side; that stretch reads FKGGKGVATA. The chain crosses the membrane as a helical span at residues 112–132; that stretch reads FGAIAPISWDLTGVMAGTWLL. Residues 133–137 are Periplasmic-facing; it reads TVLLS. The chain crosses the membrane as a helical span at residues 138–158; sequence GYSSLGAIVSALIAPFYVWWF. Over 159 to 205 the chain is Cytoplasmic; that stretch reads KPQFTFPVSMLSCLILLRHHDNIQRLWRRQETKIWTKFKRKREKDPE.

The protein belongs to the PlsY family. As to quaternary structure, probably interacts with PlsX.

The protein resides in the cell inner membrane. It catalyses the reaction sn-glycerol 3-phosphate + an acyl-CoA = a 1-acyl-sn-glycero-3-phosphate + CoA. The catalysed reaction is a fatty acyl-[ACP] + sn-glycerol 3-phosphate = a 1-acyl-sn-glycero-3-phosphate + holo-[ACP]. It participates in lipid metabolism; phospholipid metabolism. Catalyzes the transfer of an acyl group from acyl-ACP to glycerol-3-phosphate (G3P) to form lysophosphatidic acid (LPA). This enzyme can also utilize acyl-CoA as fatty acyl donor, but not acyl-PO(4). The chain is Glycerol-3-phosphate acyltransferase from Shigella flexneri serotype 5b (strain 8401).